We begin with the raw amino-acid sequence, 236 residues long: Growth-regulating factor 12 (236 aa).

Residues 1–27 (MLAEGRQVYLPPPPPSKLPRLSGTDPT) form a disordered region. The region spanning 74–109 (ALTFMQRQELEQQVLIYRYFAAGAPVPVHLVLPIWK) is the QLQ domain. Residues 140–184 (EPEPGRCRRTDGKKWRCSRDVVPGHKYCERHVHRGRGRSRKPMEA) enclose the WRC domain. 2 short sequence motifs (bipartite nuclear localization signal) span residues 145–155 (RCRRTDGKKWR) and 173–180 (RGRGRSRK).

This sequence belongs to the GRF family.

Its subcellular location is the nucleus. Transcription activator that plays a regulatory role in gibberellin-induced stem elongation. This is Growth-regulating factor 12 (GRF12) from Oryza sativa subsp. japonica (Rice).